We begin with the raw amino-acid sequence, 2344 residues long: Mucin-4 (2344 aa).

Positions 1–30 (MRGPHGVSWRVPWLCLSCLCSCLLLLPVNT) are cleaved as a signal peptide. Low complexity predominate over residues 32–46 (TTSAPKTSTALPSST). 5 disordered regions span residues 32–760 (TTSA…QGSI), 773–1036 (QKMS…TTST), 1072–1130 (VPSL…TPSV), 1171–1197 (STVAHRQSTQRSSTHSQSYLTESMGAS), and 1233–1269 (SGLTTKTDNDRSTALSATSLTLPAPSTSTASRSTVPP). Residues 47–100 (NPSQMTSQVSNPTASSYRMTKNTGQASPMVTSSSITTLPQSQHTGSMKTTRNPQ) show a composition bias toward polar residues. The variable number of tandem repeats (VNTR) stretch occupies residues 81–1006 (ITTLPQSQHT…VSTLVTSTQE (926 aa)). 2 stretches are compositionally biased toward low complexity: residues 101 to 116 (TTGTTEVTTTLSASSS) and 123 to 137 (TTSQTTLSPDTTTTS). O-linked (GalNAc...) threonine glycosylation occurs at Thr133. Positions 142–225 (ESSSPPSTSV…GGMKTTRNPQ (84 aa)) are enriched in polar residues. Low complexity predominate over residues 226-273 (TTGTTEVTTTLSASSSDHPTSSPESTPGNTAPRTTETSTTTTTKVLMT). The segment covering 274–305 (SLQQKLPTGSTLGTSTQELTTLPQSQHTGIMK) has biased composition (polar residues). Composition is skewed to low complexity over residues 306–322 (TTSRTQTTTPTEVTTRT) and 335–349 (TSSQTTLSPDTTTTS). Residues 373-436 (SGDTGHTMAV…GMKTTRNPQR (64 aa)) are compositionally biased toward polar residues. Residues Thr391 and Thr392 are each glycosylated (O-linked (GalNAc...) threonine). Positions 437 to 446 (TTPTEVTTST) are enriched in low complexity. A compositionally biased stretch (polar residues) spans 447–468 (LSASSSDQVQVETTSRATLSPD). A compositionally biased stretch (low complexity) spans 469-492 (TTTTSHAPSVSSSSPSPPSTEGTS). An O-linked (GalNAc...) threonine glycan is attached at Thr470. An O-linked (GalNAc...) serine glycan is attached at Ser479. The span at 493–509 (VDTGLTTAVTTQDSTPA) shows a compositional bias: polar residues. A compositionally biased stretch (low complexity) spans 510–546 (TTQGSLTSSSQTLSTVSPLSTSTQETSTQELTSSQSQ). A compositionally biased stretch (polar residues) spans 547–580 (HTGSMKTTHNPQTTRNTEVTTTLSASSSDQVQVE). A compositionally biased stretch (low complexity) spans 581–594 (TTSQTTLSDATTTS). Positions 599–682 (ESSSPPSTSD…GGMKTTRNPQ (84 aa)) are enriched in polar residues. Low complexity-rich tracts occupy residues 683 to 698 (TTGTTEVTTTLSASSS) and 705 to 719 (TSSQTTLSPDTTTTS). 2 stretches are compositionally biased toward polar residues: residues 724–760 (ESSSPPSTSDMLTTTASTEGTSGDTGHTTAVTTQGSI) and 773–807 (QKMSTVSTPTTSSIQELSTLPQSQHTGSMEISSRP). The span at 808-828 (QTTSVTSTLSSSPSGSTPVQT) shows a compositional bias: low complexity. Residues 829–868 (RSVTSSSDERTNPTSSGVSNTSPATTEVLTPTSSPESTPG) are compositionally biased toward polar residues. Residues 869–915 (NTAPRTTETSTTTTTKVLMTSLQQKLPTGSTLGTSTPTEVTTTLSAS) show a composition bias toward low complexity. Polar residues predominate over residues 916-994 (SSDQVQVETT…ISVTPSTQKM (79 aa)). Residues 995–1015 (STVSTLVTSTQELTSSQSQRT) are compositionally biased toward low complexity. Polar residues predominate over residues 1016–1026 (GSMGTSSKPQA). Low complexity predominate over residues 1027–1036 (TTPTEVTTST). Residues 1072–1083 (VPSLMHSSKPQA) are compositionally biased toward polar residues. A compositionally biased stretch (low complexity) spans 1084-1096 (TTPTEVTTSTLSS). The span at 1097 to 1116 (FSRGSTQTQTVSWETSSSGK) shows a compositional bias: polar residues. 3 stretches are compositionally biased toward low complexity: residues 1118-1130 (TAPSTSSRRTPSV), 1175-1188 (HRQSTQRSSTHSQS), and 1233-1267 (SGLTTKTDNDRSTALSATSLTLPAPSTSTASRSTV). The 161-residue stretch at 1332–1492 (GHSGVMLISL…TGYTGRCGPT (161 aa)) folds into the NIDO domain. Positions 1574–1597 (GRHRTGLAAGTTSPLSASSTSSGG) are disordered. Positions 1580 to 1597 (LAAGTTSPLSASSTSSGG) are enriched in low complexity. The VWFD domain occupies 1609–1804 (RPAWTFGDPH…HYGMTSETNG (196 aa)). 19 N-linked (GlcNAc...) asparagine glycosylation sites follow: Asn1644, Asn1660, Asn1672, Asn1689, Asn1698, Asn1704, Asn1715, Asn1724, Asn1759, Asn1780, Asn1787, Asn1829, Asn1874, Asn1926, Asn1951, Asn1974, Asn1981, Asn2029, and Asn2048. In terms of domain architecture, EGF-like 1 spans 2047–2086 (QNHSCPVNYCYNHGHCDISGPPDCQPTCTCAPAFTGNRCF). Cystine bridges form between Cys2051-Cys2062, Cys2056-Cys2074, and Cys2076-Cys2085. 2 N-linked (GlcNAc...) asparagine glycosylation sites follow: Asn2114 and Asn2121. A helical membrane pass occupies residues 2173 to 2193 (GPLIHYLNNQLISAVMEAFLL). N-linked (GlcNAc...) asparagine glycosylation is present at Asn2227. One can recognise an EGF-like 2 domain in the interval 2256 to 2295 (VSPCSEGYCHNGGQCKHLPDGPQCTCATFSIYTSWGERCE). 3 cysteine pairs are disulfide-bonded: Cys2259–Cys2270, Cys2264–Cys2279, and Cys2281–Cys2294. Residues 2301–2321 (LGAFFGILFGALGALLLLAIL) form a helical membrane-spanning segment.

As to quaternary structure, a heterodimeric complex, composed of a mucin-4 alpha chain and a cysteine-rich transmembrane mucin-4 beta chain. Mucin-4 beta chain interacts with ERBB2 via the EGF-like domain 1. In nonpolarized cells, associates with ERBB2 and ERBB3. In terms of processing, proteolytically cleaved into 2 subunits, mucin-4 alpha chain and mucin-4 beta chain. Mucin-4 alpha subunit is highly O-glycosylated. Post-translationally, mucin-4 beta subunit is predominantly N-glycosylated. In terms of tissue distribution, expression is developmentally regulated in the mammary gland, dramatically increases in the lactating gland compared with the virgin mammary gland, while decreasing again during mammary gland involution. Expressed in 13762 ascites cells. Overexpressed in some aggressive mammary tumors. Overexpression seems to block cell-cell and cell-matrix interactions to protect tumor cells from immune surveillance, and to promote metastasis.

It localises to the cell membrane. Its subcellular location is the secreted. Membrane-bound mucin, a family of highly glycosylated proteins that constitute the major component of the mucus, the slimy and viscous secretion covering epithelial surfaces. These glycoproteins play important roles in the protection of the epithelium and are implicated in epithelial renewal and differentiation. Regulates cellular behavior through both anti-adhesive effects on cell-cell and cell-extracellular matrix interactions and its ability to act as an intramembrane ligand for ERBB2. Plays an important role in proliferation and differentiation of epithelial cells by inducing specific phosphorylation of ERBB2. In polarized epithelial cells, segregates ERBB2 and other ERBB receptors and prevents ERBB2 from acting as a coreceptor. The interaction with ERBB2 leads to enhanced expression of CDKN1B. The formation of a MUC4-ERBB2-ERBB3-NRG1 complex leads to down-regulation of CDKN1B, resulting in repression of apoptosis and stimulation of proliferation. Its ability to promote tumor growth may be mainly due to repression of apoptosis as opposed to proliferation. The polypeptide is Mucin-4 (Muc4) (Rattus norvegicus (Rat)).